Reading from the N-terminus, the 663-residue chain is DNA ligase (663 aa).

NAD(+) is bound by residues 31–35 (DFEYD), 80–81 (SL), and glutamate 110. The N6-AMP-lysine intermediate role is filled by lysine 112. NAD(+)-binding residues include arginine 133, glutamate 168, lysine 284, and lysine 308. Residues cysteine 402, cysteine 405, cysteine 420, and cysteine 425 each contribute to the Zn(2+) site. Residues 586-663 (IKDNRFEGKT…DEDKFRKMIE (78 aa)) form the BRCT domain.

It belongs to the NAD-dependent DNA ligase family. LigA subfamily. Requires Mg(2+) as cofactor. It depends on Mn(2+) as a cofactor.

The catalysed reaction is NAD(+) + (deoxyribonucleotide)n-3'-hydroxyl + 5'-phospho-(deoxyribonucleotide)m = (deoxyribonucleotide)n+m + AMP + beta-nicotinamide D-nucleotide.. DNA ligase that catalyzes the formation of phosphodiester linkages between 5'-phosphoryl and 3'-hydroxyl groups in double-stranded DNA using NAD as a coenzyme and as the energy source for the reaction. It is essential for DNA replication and repair of damaged DNA. This is DNA ligase from Acetivibrio thermocellus (strain ATCC 27405 / DSM 1237 / JCM 9322 / NBRC 103400 / NCIMB 10682 / NRRL B-4536 / VPI 7372) (Clostridium thermocellum).